The sequence spans 455 residues: Transcriptional regulatory protein FlbD (455 aa).

A Response regulatory domain is found at 2 to 114 (RLLVVGKLNG…LIAAVLAAVT (113 aa)). In terms of domain architecture, Sigma-54 factor interaction spans 120 to 349 (MVVRDPAMEQ…LENAMHRAVL (230 aa)). ATP is bound by residues 148-155 (GESGSGKE) and 211-220 (ADGGTLLLDE). A DNA-binding region (H-T-H motif) is located at residues 416-435 (RTHAANILGISIRTLRNKLK).

The protein localises to the cytoplasm. In terms of biological role, activation of sigma-54-dependent flagellar gene promoters and strong negative autoregulatory effects on its own promoter. The synthesis and function of FlbD in C.crescentus is controlled by an internal cell-cycle clock. The polypeptide is Transcriptional regulatory protein FlbD (flbD) (Caulobacter vibrioides (strain ATCC 19089 / CIP 103742 / CB 15) (Caulobacter crescentus)).